The sequence spans 180 residues: MLPPGLESTQMKQTERRILLGRIVGAFGVKGELKLESWTEPRTAIFRYQPWIVRAPSGQESVVSGVRGRDQGKNLIAVFPGVTDRDTVEAMHGTEIYVARSALPPPKPDEYYWVDLEELQVETVEGVKLGTVSHLFSTGSNDVVVVRGDRERMIPFVFPDFVKSVDFDANLIVVDWDPDF.

The PRC barrel domain maps to 108 to 180; the sequence is PDEYYWVDLE…LIVVDWDPDF (73 aa).

The protein belongs to the RimM family. Binds ribosomal protein uS19.

It localises to the cytoplasm. In terms of biological role, an accessory protein needed during the final step in the assembly of 30S ribosomal subunit, possibly for assembly of the head region. Essential for efficient processing of 16S rRNA. May be needed both before and after RbfA during the maturation of 16S rRNA. It has affinity for free ribosomal 30S subunits but not for 70S ribosomes. The protein is Ribosome maturation factor RimM of Xanthomonas euvesicatoria pv. vesicatoria (strain 85-10) (Xanthomonas campestris pv. vesicatoria).